Reading from the N-terminus, the 350-residue chain is Dihydroorotate dehydrogenase (quinone) (350 aa).

Residues 67-71 and glycine 91 each bind FMN; that span reads AGFDK. Residue lysine 71 participates in substrate binding. Substrate is bound at residue 116-120; that stretch reads NRMGL. 2 residues coordinate FMN: asparagine 144 and asparagine 177. Asparagine 177 is a substrate binding site. Catalysis depends on cysteine 180, which acts as the Nucleophile. Residue asparagine 182 coordinates substrate. The FMN site is built by lysine 213 and threonine 241. 242–243 contacts substrate; it reads NT. The interval 245 to 265 is disordered; sequence TERPASLRSPNAVETGGLSGK. FMN contacts are provided by residues glycine 264, glycine 291, and 312-313; that span reads YT.

The protein belongs to the dihydroorotate dehydrogenase family. Type 2 subfamily. Monomer. It depends on FMN as a cofactor.

It localises to the cell membrane. It catalyses the reaction (S)-dihydroorotate + a quinone = orotate + a quinol. Its pathway is pyrimidine metabolism; UMP biosynthesis via de novo pathway; orotate from (S)-dihydroorotate (quinone route): step 1/1. Its function is as follows. Catalyzes the conversion of dihydroorotate to orotate with quinone as electron acceptor. This chain is Dihydroorotate dehydrogenase (quinone) (pyrD), found in Haloarcula marismortui (strain ATCC 43049 / DSM 3752 / JCM 8966 / VKM B-1809) (Halobacterium marismortui).